A 276-amino-acid chain; its full sequence is Mitochondrial outer membrane protein porin 2 (276 aa).

Residue Ser-76 is modified to Phosphoserine. Position 236 is a phosphothreonine (Thr-236).

The protein belongs to the eukaryotic mitochondrial porin (TC 1.B.8.1) family. Expressed in root tips, steles, leaves, sepals, petals, stamen and pistils.

It is found in the mitochondrion outer membrane. Its function is as follows. Forms a channel through the mitochondrial outer membrane that allows diffusion of small hydrophilic molecules. The channel adopts an open conformation at low or zero membrane potential and a closed conformation at potentials above 30-40 mV. The open state has a weak anion selectivity whereas the closed state is cation-selective. Involved in plant growth and development at the vegetative and reproductive stages. Is important for leaf and pollen development and mitochondrial membrane potential steady state. May be involved in ABA-mediated early seedling development and disease resistance. The protein is Mitochondrial outer membrane protein porin 2 (VDAC2) of Arabidopsis thaliana (Mouse-ear cress).